Consider the following 171-residue polypeptide: Large ribosomal subunit protein bL17 (171 aa).

The tract at residues 130 to 171 (PGYKKSKGKKATKAKGKKAKATPAAEAAAAATTEAAPAEEKK) is disordered. Positions 133–149 (KKSKGKKATKAKGKKAK) are enriched in basic residues. Residues 150 to 165 (ATPAAEAAAAATTEAA) show a composition bias toward low complexity.

The protein belongs to the bacterial ribosomal protein bL17 family. As to quaternary structure, part of the 50S ribosomal subunit. Contacts protein L32.

The polypeptide is Large ribosomal subunit protein bL17 (Opitutus terrae (strain DSM 11246 / JCM 15787 / PB90-1)).